The following is a 97-amino-acid chain: UPF0235 protein APL_1380 (97 aa).

Belongs to the UPF0235 family.

The protein is UPF0235 protein APL_1380 of Actinobacillus pleuropneumoniae serotype 5b (strain L20).